Here is a 167-residue protein sequence, read N- to C-terminus: tRNA-specific adenosine deaminase (167 aa).

The region spanning 6-117 (FSHEYWMRHA…DAKTGAAGSL (112 aa)) is the CMP/dCMP-type deaminase domain. Zn(2+) is bound at residue histidine 57. The active-site Proton donor is glutamate 59. Zn(2+)-binding residues include cysteine 87 and cysteine 90.

This sequence belongs to the cytidine and deoxycytidylate deaminase family. As to quaternary structure, homodimer. It depends on Zn(2+) as a cofactor.

It catalyses the reaction adenosine(34) in tRNA + H2O + H(+) = inosine(34) in tRNA + NH4(+). Functionally, catalyzes the deamination of adenosine to inosine at the wobble position 34 of tRNA(Arg2). Essential for cell viability. This Escherichia coli (strain K12) protein is tRNA-specific adenosine deaminase.